The primary structure comprises 177 residues: MALKRSYYASKDDYSTKRILEIIERPLKKLTIEDTSEYDDSDIEMPTCKRVAYYKNEYTIVVEDLDAELEEDDSINKPTEEADEAPRTQLSVISPLEKKLKRDFLFLLLNSNRQPGKSSGKSSIPSPDDFKLSVKYSSSSEDLGAVTIESHLNVSSDASIKYKSSGTSQSDLLMEIG.

The segment at 71-90 (EDDSINKPTEEADEAPRTQL) is disordered. Over residues 74–86 (SINKPTEEADEAP) the composition is skewed to basic and acidic residues.

The protein resides in the nucleus. In terms of biological role, involved in meiotic chromosome segregation. The chain is Meiotic chromosome segregation protein C17A2.07c from Schizosaccharomyces pombe (strain 972 / ATCC 24843) (Fission yeast).